A 365-amino-acid chain; its full sequence is tRNA-specific 2-thiouridylase MnmA (365 aa).

ATP contacts are provided by residues A14–S21 and L40. C108 functions as the Nucleophile in the catalytic mechanism. C108 and C204 are oxidised to a cystine. G132 serves as a coordination point for ATP. The tract at residues K154–Q156 is interaction with tRNA. Residue C204 is the Cysteine persulfide intermediate of the active site.

The protein belongs to the MnmA/TRMU family.

It localises to the cytoplasm. The catalysed reaction is S-sulfanyl-L-cysteinyl-[protein] + uridine(34) in tRNA + AH2 + ATP = 2-thiouridine(34) in tRNA + L-cysteinyl-[protein] + A + AMP + diphosphate + H(+). Catalyzes the 2-thiolation of uridine at the wobble position (U34) of tRNA, leading to the formation of s(2)U34. This is tRNA-specific 2-thiouridylase MnmA from Rickettsia africae (strain ESF-5).